A 260-amino-acid chain; its full sequence is Adenosine 5'-phosphosulfate reductase (260 aa).

4 residues coordinate [4Fe-4S] cluster: cysteine 130, cysteine 131, cysteine 213, and cysteine 216. Cysteine 241 (nucleophile; cysteine thiosulfonate intermediate) is an active-site residue.

The protein belongs to the PAPS reductase family. CysH subfamily. It depends on [4Fe-4S] cluster as a cofactor.

It is found in the cytoplasm. It catalyses the reaction [thioredoxin]-disulfide + sulfite + AMP + 2 H(+) = adenosine 5'-phosphosulfate + [thioredoxin]-dithiol. It functions in the pathway sulfur metabolism; hydrogen sulfide biosynthesis; sulfite from sulfate. Catalyzes the formation of sulfite from adenosine 5'-phosphosulfate (APS) using thioredoxin as an electron donor. This is Adenosine 5'-phosphosulfate reductase from Agrobacterium fabrum (strain C58 / ATCC 33970) (Agrobacterium tumefaciens (strain C58)).